Reading from the N-terminus, the 991-residue chain is 5'-3' exoribonuclease 2 (991 aa).

The short motif at 264–268 (TKKTK) is the Nuclear localization signal element. A compositionally biased stretch (basic and acidic residues) spans 404–418 (RRNENYRRRQQRESN). 3 disordered regions span residues 404 to 461 (RRNE…TQKI), 547 to 582 (SIES…ENTD), and 872 to 991 (AERS…NGYY). Low complexity predominate over residues 433–452 (SVETQSTEVVTSSKSTSVDT). Composition is skewed to low complexity over residues 878–889 (SRRNNGNSYRGG) and 896–910 (RRSY…RQSY). Residues 926-938 (WSGNGNFPRSNAS) show a composition bias toward polar residues. Gly residues predominate over residues 946–958 (EGYGGRSRGGGYS). Over residues 980-991 (ESYNNNNRNGYY) the composition is skewed to polar residues.

It belongs to the 5'-3' exonuclease family. XRN2/RAT1 subfamily. Interacts with din1/rai1; the interaction is direct, stabilizes dhp1 protein structure and may stimulate its exoribonuclease activity. The interaction also stimulates din1 pyrophosphohydrolase activity, probably by recruiting it to mRNA substrates.

It localises to the nucleus. Possesses 5'-&gt;3' exoribonuclease activity. Required for the processing of nuclear mRNA and rRNA precursors. May promote the termination of transcription by RNA polymerase II. Essential for vegetative cell growth and chromosome segregation. The polypeptide is 5'-3' exoribonuclease 2 (dhp1) (Schizosaccharomyces pombe (strain 972 / ATCC 24843) (Fission yeast)).